A 295-amino-acid chain; its full sequence is Small ribosomal subunit protein uS2 (295 aa).

At serine 2 the chain carries N-acetylserine. Serine 43 bears the Phosphoserine mark. The residue at position 52 (lysine 52) is an N6-acetyllysine. Residues 54 to 113 (TWEKLLLAARAIVAIENPADVSVISSRNTGQRAVLKFAAATGATPIAGRFTPGTFTNQIQ) are interaction with PPP1R16B. The residue at position 89 (lysine 89) is an N6-acetyllysine; alternate. Lysine 89 participates in a covalent cross-link: Glycyl lysine isopeptide (Lys-Gly) (interchain with G-Cter in SUMO2); alternate. The residue at position 97 (threonine 97) is a Phosphothreonine. Laminin-binding regions lie at residues 161–180 (IPCN…MLAR) and 205–229 (RDPE…EFQG). 5 [DE]-W-[ST] repeats span residues 230-232 (EWT), 247-249 (DWS), 266-268 (DWS), 275-277 (DWS), and 293-295 (EWS). The interval 242 to 295 (QPEVADWSEGVQVPSVPIQQFPTEDWSAQPATEDWSAAPTAQATEWVGTTTEWS) is laminin-binding. A disordered region spans residues 266 to 295 (DWSAQPATEDWSAAPTAQATEWVGTTTEWS). The segment covering 280 to 295 (PTAQATEWVGTTTEWS) has biased composition (polar residues).

Belongs to the universal ribosomal protein uS2 family. Monomer (37LRP) and homodimer (67LR). Component of the small ribosomal subunit. Mature ribosomes consist of a small (40S) and a large (60S) subunit. The 40S subunit contains about 33 different proteins and 1 molecule of RNA (18S). The 60S subunit contains about 49 different proteins and 3 molecules of RNA (28S, 5.8S and 5S). Interacts with RPS21. Interacts with several laminins including at least LAMB1. Interacts with MDK. The mature dimeric form interacts with PPP1R16B (via its fourth ankyrin repeat). Interacts with PPP1CA only in the presence of PPP1R16B. Post-translationally, acylated. Acylation may be a prerequisite for conversion of the monomeric 37 kDa laminin receptor precursor (37LRP) to the mature dimeric 67 kDa laminin receptor (67LR), and may provide a mechanism for membrane association. Cleaved by stromelysin-3 (ST3) at the cell surface. Cleavage by stromelysin-3 may be a mechanism to alter cell-extracellular matrix interactions.

It is found in the cell membrane. The protein resides in the cytoplasm. The protein localises to the nucleus. Functionally, required for the assembly and/or stability of the 40S ribosomal subunit. Required for the processing of the 20S rRNA-precursor to mature 18S rRNA in a late step of the maturation of 40S ribosomal subunits. Also functions as a cell surface receptor for laminin. Plays a role in cell adhesion to the basement membrane and in the consequent activation of signaling transduction pathways. May play a role in cell fate determination and tissue morphogenesis. Also acts as a receptor for several other ligands, including the pathogenic prion protein, viruses, and bacteria. Acts as a PPP1R16B-dependent substrate of PPP1CA. This is Small ribosomal subunit protein uS2 from Oryctolagus cuniculus (Rabbit).